The sequence spans 133 residues: Large ribosomal subunit protein uL15 (133 aa).

The segment at 1-57 is disordered; it reads MALEKLTPAAGSTHATKRIGRGQGSGNGKTAGKGNKGQRARKGYNEKRGFEGGQQPL. A compositionally biased stretch (gly residues) spans 21–35; that stretch reads RGQGSGNGKTAGKGN.

It belongs to the universal ribosomal protein uL15 family. In terms of assembly, part of the 50S ribosomal subunit.

Functionally, binds to the 23S rRNA. The chain is Large ribosomal subunit protein uL15 from Campylobacter concisus (strain 13826).